We begin with the raw amino-acid sequence, 182 residues long: Dual-action ribosomal maturation protein DarP (182 aa).

Belongs to the DarP family.

The protein resides in the cytoplasm. Functionally, member of a network of 50S ribosomal subunit biogenesis factors which assembles along the 30S-50S interface, preventing incorrect 23S rRNA structures from forming. Promotes peptidyl transferase center (PTC) maturation. This chain is Dual-action ribosomal maturation protein DarP, found in Serratia proteamaculans (strain 568).